The primary structure comprises 506 residues: 2,3-bisphosphoglycerate-independent phosphoglycerate mutase (506 aa).

2 residues coordinate Mn(2+): Asp13 and Ser63. Ser63 functions as the Phosphoserine intermediate in the catalytic mechanism. Substrate is bound by residues His124, 153 to 154 (RD), Arg183, Arg189, 254 to 257 (RADR), and Lys330. The Mn(2+) site is built by Asp396, His400, Asp437, His438, and His456.

It belongs to the BPG-independent phosphoglycerate mutase family. Monomer. Requires Mn(2+) as cofactor.

The catalysed reaction is (2R)-2-phosphoglycerate = (2R)-3-phosphoglycerate. It functions in the pathway carbohydrate degradation; glycolysis; pyruvate from D-glyceraldehyde 3-phosphate: step 3/5. In terms of biological role, catalyzes the interconversion of 2-phosphoglycerate and 3-phosphoglycerate. In Cereibacter sphaeroides (strain KD131 / KCTC 12085) (Rhodobacter sphaeroides), this protein is 2,3-bisphosphoglycerate-independent phosphoglycerate mutase.